Consider the following 173-residue polypeptide: Shikimate kinase (173 aa).

11–16 (GAGKTT) serves as a coordination point for ATP. Threonine 15 lines the Mg(2+) pocket. Substrate is bound by residues aspartate 33, arginine 57, and glycine 79. Position 118 (arginine 118) interacts with ATP. Arginine 140 contributes to the substrate binding site.

It belongs to the shikimate kinase family. Monomer. Requires Mg(2+) as cofactor.

Its subcellular location is the cytoplasm. It carries out the reaction shikimate + ATP = 3-phosphoshikimate + ADP + H(+). It participates in metabolic intermediate biosynthesis; chorismate biosynthesis; chorismate from D-erythrose 4-phosphate and phosphoenolpyruvate: step 5/7. In terms of biological role, catalyzes the specific phosphorylation of the 3-hydroxyl group of shikimic acid using ATP as a cosubstrate. The sequence is that of Shikimate kinase from Parabacteroides distasonis (strain ATCC 8503 / DSM 20701 / CIP 104284 / JCM 5825 / NCTC 11152).